The primary structure comprises 509 residues: Glycogen synthase (509 aa).

Lys47 contacts ADP-alpha-D-glucose.

The protein belongs to the glycosyltransferase 1 family. Bacterial/plant glycogen synthase subfamily.

The enzyme catalyses [(1-&gt;4)-alpha-D-glucosyl](n) + ADP-alpha-D-glucose = [(1-&gt;4)-alpha-D-glucosyl](n+1) + ADP + H(+). The protein operates within glycan biosynthesis; glycogen biosynthesis. Its function is as follows. Synthesizes alpha-1,4-glucan chains using ADP-glucose. In Xanthomonas euvesicatoria pv. vesicatoria (strain 85-10) (Xanthomonas campestris pv. vesicatoria), this protein is Glycogen synthase.